The chain runs to 524 residues: MPPKKEPVISAFERKRLENIANNNAILSGISTTAEKIIPKPAPPKPKRASAPRAKREPVKRETARPTRQSSRLAGLDADADTLKRKAEVEAEVEAEKAKAKKMRVSGDLSLGDIQVEGRKWENGLDGLAGLKGLSARGAQPGIRTFTDEDVKGTTDKGLKDLRLRMSGLKLYEKWPVQGAYPKLVPQRVYSLGFHPTESKPIIFAGDKEGAMGVFDASQEPVKAEDDDDDEEAEIPDPIISAFKTHSRTITSFHFSPVDANAVYSASYDSSIRKLDLDKGVSTEAFAPADADEDLPISAIDMPTSDPNMIIFSTLQGTLGRHDLRTKSSTAEIWGLTDQKIGGFSLHPAQPHLVATASLDRTLKIWDLRKIQGKGDARAPALLGTHDSRLSVSHASWSSAGHVATSSYDDRIKIYNFPDADKWTAGAALTEAQMEPARQIPHNNQTGRWVTILKPQWQRSPRDGLQKFVIGNMNRFVDVFAADGEQLAQLGGDGITAVPAVAHFHPTMDWVAGGNGSGKLCLWM.

The disordered stretch occupies residues 35–79 (EKIIPKPAPPKPKRASAPRAKREPVKRETARPTRQSSRLAGLDAD). Residues 54–65 (AKREPVKRETAR) show a composition bias toward basic and acidic residues. 7 WD repeats span residues 184-225 (LVPQ…VKAE), 245-285 (THSR…STEA), 295-332 (LPIS…STAE), 336-376 (LTDQ…GKGD), 385-425 (THDS…KWTA), 447-490 (GRWV…LAQL), and 493-524 (DGIT…CLWM).

It belongs to the WD repeat DDB2/WDR76 family.

In terms of biological role, DNA-binding protein that binds to both single- and double-stranded DNA. Binds preferentially to UV-damaged DNA. May be involved in DNA-metabolic processes. This chain is DNA damage-binding protein CMR1, found in Chaetomium globosum (strain ATCC 6205 / CBS 148.51 / DSM 1962 / NBRC 6347 / NRRL 1970) (Soil fungus).